Consider the following 507-residue polypeptide: ATP synthase subunit alpha, chloroplastic (507 aa).

170–177 (GDRQTGKT) is an ATP binding site.

Belongs to the ATPase alpha/beta chains family. In terms of assembly, F-type ATPases have 2 components, CF(1) - the catalytic core - and CF(0) - the membrane proton channel. CF(1) has five subunits: alpha(3), beta(3), gamma(1), delta(1), epsilon(1). CF(0) has four main subunits: a, b, b' and c.

The protein resides in the plastid. It is found in the chloroplast thylakoid membrane. The catalysed reaction is ATP + H2O + 4 H(+)(in) = ADP + phosphate + 5 H(+)(out). Its function is as follows. Produces ATP from ADP in the presence of a proton gradient across the membrane. The alpha chain is a regulatory subunit. This Gossypium barbadense (Sea Island cotton) protein is ATP synthase subunit alpha, chloroplastic.